A 65-amino-acid polypeptide reads, in one-letter code: Small ribosomal subunit protein eS17 (65 aa).

Belongs to the eukaryotic ribosomal protein eS17 family.

In Methanobrevibacter smithii (strain ATCC 35061 / DSM 861 / OCM 144 / PS), this protein is Small ribosomal subunit protein eS17.